A 60-amino-acid chain; its full sequence is Protein CADMIUM TOLERANCE 4 (60 aa).

A helical transmembrane segment spans residues 26–42; sequence GFLYACLFMLCCCFCCY.

The protein belongs to the CYSTM1 family. As to expression, mainly expressed in shoots, and, to a lower extent, in roots.

The protein localises to the cell membrane. It is found in the secreted. The protein resides in the cell wall. In terms of biological role, confers resistance to heavy metal ions (e.g. aluminium (Al)) by chelating them at the plasma membrane of root cells, thus stopping their entry and reducing their accumulation. In Oryza sativa subsp. japonica (Rice), this protein is Protein CADMIUM TOLERANCE 4.